The following is a 76-amino-acid chain: DNA-directed RNA polymerase subunit omega (76 aa).

The protein belongs to the RNA polymerase subunit omega family. As to quaternary structure, the RNAP catalytic core consists of 2 alpha, 1 beta, 1 beta' and 1 omega subunit. When a sigma factor is associated with the core the holoenzyme is formed, which can initiate transcription.

It carries out the reaction RNA(n) + a ribonucleoside 5'-triphosphate = RNA(n+1) + diphosphate. Functionally, promotes RNA polymerase assembly. Latches the N- and C-terminal regions of the beta' subunit thereby facilitating its interaction with the beta and alpha subunits. This is DNA-directed RNA polymerase subunit omega from Staphylococcus carnosus (strain TM300).